We begin with the raw amino-acid sequence, 253 residues long: Trans-aconitate 2-methyltransferase (253 aa).

The protein belongs to the methyltransferase superfamily. Tam family.

It is found in the cytoplasm. The enzyme catalyses trans-aconitate + S-adenosyl-L-methionine = (E)-3-(methoxycarbonyl)pent-2-enedioate + S-adenosyl-L-homocysteine. Its function is as follows. Catalyzes the S-adenosylmethionine monomethyl esterification of trans-aconitate. This is Trans-aconitate 2-methyltransferase from Klebsiella pneumoniae (strain 342).